A 579-amino-acid polypeptide reads, in one-letter code: MQQPQQQDLQIGLPYAPVQPPIPSPAAYFAYLPSPSRWTFTQGLIVGQVSMVIVALLLIRYVIFEDSATALEKERLMRLKVSQRRSKLHAKALLQDARKANSAAASAAAAAAPSPASHPLRKSHRLASDTRASMFANILDKTAYDLSSHLPESADWLNVMFAQAIAGYREDVLTGGVSSHHHTASDAIPSPNPLEPQKERTARDLMEEILNRATSSFLDPIRVTEADFGDAYPIFTNARVRPADDTGRTRIEIDVDYSDQITLAIDTKLLINFPKPRFAVLPVSLGLTIVRFSGTLAIELFSSDPNATVLPTANPNPSSSSSSSATPPRSRHQLHFSLHPDFALEASATSLLGSRAKLQDIPKIEQLLISRLRGWIMDRFVWPRYWSLTLPNLVPSPAASRSFSAAAAANRHTDAASVGSSGGHGQINVGTGVERTDASVIQPGHHESARQEMLHAASERPSLASSRPPHVRSSSSGLRANGMGSVEAWRAHAAGVYNQPSHQHATSLNQAALLRAHVGGGGATDCAPGSDVNIEVPGSYRGSVAGAGIELASSSNASSVLPTGAHHSSGLRNRPGFVQ.

Topologically, residues 1–43 (MQQPQQQDLQIGLPYAPVQPPIPSPAAYFAYLPSPSRWTFTQG) are lumenal. Residues 44-64 (LIVGQVSMVIVALLLIRYVIF) traverse the membrane as a helical segment. At 65 to 579 (EDSATALEKE…GLRNRPGFVQ (515 aa)) the chain is on the cytoplasmic side. Positions 150–391 (LPESADWLNV…WPRYWSLTLP (242 aa)) constitute an SMP-LTD domain. 3 disordered regions span residues 309–332 (VLPT…RSRH), 460–479 (RPSL…SGLR), and 558–579 (SSVL…GFVQ). Composition is skewed to low complexity over residues 311-328 (PTAN…ATPP) and 465-476 (SSRPPHVRSSSS).

The protein belongs to the MMM1 family. As to quaternary structure, homodimer. Component of the ER-mitochondria encounter structure (ERMES) or MDM complex, composed of MMM1, MDM10, MDM12 and MDM34. An MMM1 homodimer associates with one molecule of MDM12 on each side in a pairwise head-to-tail manner, and the SMP-LTD domains of MMM1 and MDM12 generate a continuous hydrophobic tunnel for phospholipid trafficking.

Its subcellular location is the endoplasmic reticulum membrane. Functionally, component of the ERMES/MDM complex, which serves as a molecular tether to connect the endoplasmic reticulum (ER) and mitochondria. Components of this complex are involved in the control of mitochondrial shape and protein biogenesis, and function in nonvesicular lipid trafficking between the ER and mitochondria. The MDM12-MMM1 subcomplex functions in the major beta-barrel assembly pathway that is responsible for biogenesis of all outer membrane beta-barrel proteins, and acts in a late step after the SAM complex. The MDM10-MDM12-MMM1 subcomplex further acts in the TOM40-specific pathway after the action of the MDM12-MMM1 complex. Essential for establishing and maintaining the structure of mitochondria and maintenance of mtDNA nucleoids. This Mycosarcoma maydis (Corn smut fungus) protein is Maintenance of mitochondrial morphology protein 1.